The following is a 1183-amino-acid chain: MAAILLPQRFRGEAPVTEKTTPSWASKRLTPIAQFLSRLACSHPIHTVVVVAVLASTSYVGLLQESLFNTDVESATLGKADWSTLVEGSRVLRAGPETAWNWKAVEQDVVADAGSDADHLALLTLVFPDSLSAESSSTAPRSHHVPIPQNLSITSLPSTENPFTAYSQDSILAYALPYSEGPEFLAAAQEIPNEDAVEIETKHGREKKTWIMKAAKVNTRNSVVQWVSNAWSEFLDLLKNAETLDIVIMLLGYIAMHLTFVSLFLSMRKMGSKFWLGICTLFSSVFAFLFGLVVTTKLGVPISVILLSEGLPFLVVTIGFEKNIVLTRAVMSHAIEHRRIQAQNSKSGKRSPERSTQNMIQYAVQAAIKEKGFEIIRDYAIEIVILVIGAASGVQGGLQQFCFLAAWTLFFDFILLFTFYTAILSIKLEINRIKRHVDMRMALEDDGVSRRVAENVAKGDDELNRVRGDAPLFGRKSSSIPKFKVLMILGFIFVNIVNICSIPFRNPSSMSTIRTWASSLGGVIAPLSVDPFKVASNGLDAILATAKSNNRPTLVTVLTPIKYELEYPSIHYALGSAASNPAYNDAFHHHFQGYGVGGRMVGGILKSLEDPVLSKWIVIALALSVALNGYLFNVARWGIKDPNVPEHNIDRNELARAQQFNDTGSATLPLGEYVPPTPMRTQPSTPAITDDEAEGLHMTKARPANLPNRSNEELEKLLSEKRVREMTDEEVISLSMRGKIPGYALEKTLGDFTRAVKIRRSIIARNKATTDITHSLDRSKLPYENYNWERVFGACCENVIGYMPLPVGVAGPLVIDGQSYFIPMATTEGVLVASASRGCKAINSGGGAITVLTADGMTRGPCVAFETLERAGAAKLWLDSEAGQDMMKKAFNSTSRFARLQSMKTALAGTNLYIRFKTTTGDAMGMNMISKGVEHALSVMANDGGFDDMQIISVSGNYCTDKKAAALNWIDGRGKGVVAEAIIPGEVVRSVLKSDVDSLVELNVAKNLIGSAMAGSVGGFNAHAANIVAAIFLATGQDPAQVVESANCITIMKNLNGALQISVSMPSLEVGTLGGGTILEPQGAMLDILGVRGSHPTNPGDNARRLARIIGAAVLAGELSLCSALAAGHLVRAHMQHNRSAAPSRSTTPAPPMTPVSLAMTSAQERSASTTSMSAAAIQRSKR.

At 1–245 the chain is on the cytoplasmic side; that stretch reads MAAILLPQRF…DLLKNAETLD (245 aa). The 182-residue stretch at 245–426 folds into the SSD domain; it reads DIVIMLLGYI…FTFYTAILSI (182 aa). Residues 246-266 form a helical membrane-spanning segment; it reads IVIMLLGYIAMHLTFVSLFLS. Topologically, residues 267–273 are lumenal; it reads MRKMGSK. The chain crosses the membrane as a helical span at residues 274–294; it reads FWLGICTLFSSVFAFLFGLVV. Topologically, residues 295–299 are cytoplasmic; it reads TTKLG. A helical transmembrane segment spans residues 300-320; the sequence is VPISVILLSEGLPFLVVTIGF. The Lumenal segment spans residues 321–378; sequence EKNIVLTRAVMSHAIEHRRIQAQNSKSGKRSPERSTQNMIQYAVQAAIKEKGFEIIRD. Residues 379 to 399 form a helical membrane-spanning segment; it reads YAIEIVILVIGAASGVQGGLQ. Topologically, residues 400-402 are cytoplasmic; the sequence is QFC. Residues 403-423 traverse the membrane as a helical segment; it reads FLAAWTLFFDFILLFTFYTAI. The Lumenal segment spans residues 424–482; it reads LSIKLEINRIKRHVDMRMALEDDGVSRRVAENVAKGDDELNRVRGDAPLFGRKSSSIPK. A helical membrane pass occupies residues 483-503; it reads FKVLMILGFIFVNIVNICSIP. Residues 504-1183 lie on the Cytoplasmic side of the membrane; that stretch reads FRNPSSMSTI…SAAAIQRSKR (680 aa). E828 (charge relay system) is an active-site residue. Residue 834 to 840 coordinates CoA; that stretch reads SASRGCK. Residues 895–897 and 922–930 each bind NADP(+); these read SRF and DAMGMNMIS. K962 functions as the Charge relay system in the catalytic mechanism. Position 991-993 (991-993) interacts with CoA; the sequence is VLK. D1038 functions as the Charge relay system in the catalytic mechanism. 1133–1134 provides a ligand contact to CoA; that stretch reads AH. The active-site Proton donor is the H1134. The disordered stretch occupies residues 1136-1183; that stretch reads QHNRSAAPSRSTTPAPPMTPVSLAMTSAQERSASTTSMSAAAIQRSKR. An NADP(+)-binding site is contributed by 1138 to 1139; the sequence is NR. Low complexity-rich tracts occupy residues 1139 to 1148 and 1167 to 1177; these read RSAAPSRSTT and SASTTSMSAAA.

It belongs to the HMG-CoA reductase family.

It localises to the endoplasmic reticulum membrane. It carries out the reaction (R)-mevalonate + 2 NADP(+) + CoA = (3S)-3-hydroxy-3-methylglutaryl-CoA + 2 NADPH + 2 H(+). It functions in the pathway metabolic intermediate biosynthesis; (R)-mevalonate biosynthesis; (R)-mevalonate from acetyl-CoA: step 3/3. Its function is as follows. HMG-CoA reductase; part of the first module of ergosterol biosynthesis pathway that includes the early steps of the pathway, conserved across all eukaryotes, and which results in the formation of mevalonate from acetyl-coenzyme A (acetyl-CoA). In this module, the cytosolic acetyl-CoA acetyltransferase catalyzes the formation of acetoacetyl-CoA. The hydroxymethylglutaryl-CoA synthase then condenses acetyl-CoA with acetoacetyl-CoA to form HMG-CoA. The rate-limiting step of the early module is the reduction to mevalonate by the 3-hydroxy-3-methylglutaryl-coenzyme A (HMG-CoA) reductase HMGR. This Gibberella fujikuroi (strain CBS 195.34 / IMI 58289 / NRRL A-6831) (Bakanae and foot rot disease fungus) protein is 3-hydroxy-3-methylglutaryl-coenzyme A reductase (HMGR).